The following is a 713-amino-acid chain: P-loop NTPase domain-containing protein LPA1 homolog (713 aa).

Disordered stretches follow at residues 218-249, 504-575, and 650-713; these read AKKR…PIGK, TSQA…EDLS, and LDSP…APDK. The span at 231–246 shows a compositional bias: basic and acidic residues; sequence DFDKTRPLNDKPDGKP. The span at 504–531 shows a compositional bias: polar residues; it reads TSQAGSVNESWDNANEGTGSHVPSSSGS. The segment covering 533 to 544 has biased composition (basic and acidic residues); that stretch reads KKLDGHCKEIKE. Residues 551–562 show a composition bias toward acidic residues; it reads SDDDEEEEEEAA. A compositionally biased stretch (low complexity) spans 656–668; sequence ARSSSALPISASS.

Functionally, required for the accumulation of phytic acid in seeds. Phytic acid is the primary storage form of phosphorus in cereal grains and other plant seeds. This is P-loop NTPase domain-containing protein LPA1 homolog from Oryza sativa subsp. japonica (Rice).